A 323-amino-acid chain; its full sequence is Probable oxidoreductase patJ (323 aa).

The segment at 291–323 is disordered; it reads DQSANGVNGHATGVEAKKKQLGDMTRRRSGAQE. The segment covering 305 to 316 has biased composition (basic and acidic residues); that stretch reads EAKKKQLGDMTR.

The protein belongs to the oxidoreductase OpS7 family.

Its subcellular location is the vacuole lumen. The protein localises to the cytoplasmic vesicle lumen. It participates in mycotoxin biosynthesis; patulin biosynthesis. In terms of biological role, probable oxidoreductase; part of the gene cluster that mediates the biosynthesis of patulin, an acetate-derived tetraketide mycotoxin produced by several fungal species that shows antimicrobial properties against several bacteria. PatJ acts with patO in the vacuole to convert gentisyl alcohol to isoepoxydon. The pathway begins with the synthesis of 6-methylsalicylic acid by the polyketide synthase (PKS) patK via condensation of acetate and malonate units. The 6-methylsalicylic acid decarboxylase patG then catalyzes the decarboxylation of 6-methylsalicylic acid to yield m-cresol (also known as 3-methylphenol). These first reactions occur in the cytosol. The intermediate m-cresol is then transported into the endoplasmic reticulum where the cytochrome P450 monooxygenase patH converts it to m-hydroxybenzyl alcohol, which is further converted to gentisyl alcohol by the cytochrome P450 monooxygenase patI. The oxidoreductases patJ and patO further convert gentisyl alcohol to isoepoxydon in the vacuole. PatN catalyzes then the transformation of isoepoxydon into phyllostine. The cluster protein patF is responsible for the conversion from phyllostine to neopatulin whereas the alcohol dehydrogenase patD converts neopatulin to E-ascladiol. The steps between isoepoxydon and E-ascladiol occur in the cytosol, and E-ascladiol is probably secreted to the extracellular space by one of the cluster-specific transporters patC or patM. Finally, the secreted patulin synthase patE catalyzes the conversion of E-ascladiol to patulin. This chain is Probable oxidoreductase patJ, found in Aspergillus clavatus (strain ATCC 1007 / CBS 513.65 / DSM 816 / NCTC 3887 / NRRL 1 / QM 1276 / 107).